The following is an 800-amino-acid chain: DNA topoisomerase 4 subunit A (800 aa).

One can recognise a Topo IIA-type catalytic domain in the interval 31-495 (LPDVRDGLKP…EIEEIKIDKE (465 aa)). Tyr119 (O-(5'-phospho-DNA)-tyrosine intermediate) is an active-site residue.

It belongs to the type II topoisomerase GyrA/ParC subunit family. ParC type 2 subfamily. Heterotetramer composed of ParC and ParE.

Its subcellular location is the cell membrane. The catalysed reaction is ATP-dependent breakage, passage and rejoining of double-stranded DNA.. In terms of biological role, topoisomerase IV is essential for chromosome segregation. It relaxes supercoiled DNA. Performs the decatenation events required during the replication of a circular DNA molecule. In Staphylococcus aureus (strain N315), this protein is DNA topoisomerase 4 subunit A.